A 98-amino-acid chain; its full sequence is Large ribosomal subunit protein eL21 (98 aa).

The tract at residues 1-23 (MVDRKGKGFRRKTRDKLSKHPRQ) is disordered. Residues 7 to 23 (KGFRRKTRDKLSKHPRQ) are compositionally biased toward basic residues.

It belongs to the eukaryotic ribosomal protein eL21 family.

The chain is Large ribosomal subunit protein eL21 from Nanoarchaeum equitans (strain Kin4-M).